The chain runs to 428 residues: Patatin-like protein 3 (428 aa).

Positions 38–252 (LSIDGGGIRG…AANNPTLCAI (215 aa)) constitute a PNPLA domain. The short motif at 42 to 47 (GGGIRG) is the GXGXXG element. The short motif at 80 to 84 (GTSTG) is the GXSXG element. The active-site Nucleophile is serine 82. Residue aspartate 239 is the Proton acceptor of the active site. A DGA/G motif is present at residues 239-241 (DGG). Serine 423 carries the post-translational modification Phosphoserine.

Belongs to the patatin family. Expressed specifically in the stigma, ovary and funiculus of the ovary.

Its subcellular location is the cytoplasm. Possesses non-specific lipolytic acyl hydrolase (LAH) activity. Catalyzes the hydrolysis of the neutral lipids monogalactosyldiacylglycerol (MGDG), digalactosyldiacylglycerol (DGDG) and phosphatidylglycerol (PG), and less efficiently the polar lipids phosphatidylcholine (PC) and phosphatidylinositol (PI), but not the storage lipid triacylglycerol (TAG). May play a role in root development. The polypeptide is Patatin-like protein 3 (PLP3) (Arabidopsis thaliana (Mouse-ear cress)).